The chain runs to 208 residues: NAD(P)H-quinone oxidoreductase subunit I (208 aa).

2 4Fe-4S ferredoxin-type domains span residues 55-84 (GRIH…VDWV) and 95-124 (RNYS…MTEE). Positions 64, 67, 70, 74, 104, 107, 110, and 114 each coordinate [4Fe-4S] cluster.

The protein belongs to the complex I 23 kDa subunit family. NDH-1 is composed of at least 11 different subunits. [4Fe-4S] cluster is required as a cofactor.

The protein localises to the cellular thylakoid membrane. The enzyme catalyses a plastoquinone + NADH + (n+1) H(+)(in) = a plastoquinol + NAD(+) + n H(+)(out). It carries out the reaction a plastoquinone + NADPH + (n+1) H(+)(in) = a plastoquinol + NADP(+) + n H(+)(out). Its function is as follows. NDH-1 shuttles electrons from an unknown electron donor, via FMN and iron-sulfur (Fe-S) centers, to quinones in the respiratory and/or the photosynthetic chain. The immediate electron acceptor for the enzyme in this species is believed to be plastoquinone. Couples the redox reaction to proton translocation, and thus conserves the redox energy in a proton gradient. In Prochlorococcus marinus (strain MIT 9215), this protein is NAD(P)H-quinone oxidoreductase subunit I.